Reading from the N-terminus, the 529-residue chain is GTPase Obg (529 aa).

An Obg domain is found at 2 to 159 (ASFVDRVVLH…SDIVLELKSI (158 aa)). The 184-residue stretch at 160 to 343 (ADIALVGFPS…LGFAMAEIVK (184 aa)) folds into the OBG-type G domain. Residues 166-173 (GFPSAGKS), 191-195 (FTTLI), 212-215 (DVPG), 295-298 (NKVD), and 324-326 (SAT) each bind GTP. Mg(2+)-binding residues include S173 and T193. Residues 363-447 (PRAVNEAGFK…DDGVVFDWEP (85 aa)) form the OCT domain. Residues 466–502 (FADIGDRPTRGQKRDEQQERRDAKAAARAELEAERKA) show a composition bias toward basic and acidic residues. Residues 466 to 529 (FADIGDRPTR…ESGLTTENEE (64 aa)) are disordered.

Belongs to the TRAFAC class OBG-HflX-like GTPase superfamily. OBG GTPase family. In terms of assembly, monomer. The cofactor is Mg(2+).

It is found in the cytoplasm. An essential GTPase which binds GTP, GDP and possibly (p)ppGpp with moderate affinity, with high nucleotide exchange rates and a fairly low GTP hydrolysis rate. Plays a role in control of the cell cycle, stress response, ribosome biogenesis and in those bacteria that undergo differentiation, in morphogenesis control. This chain is GTPase Obg, found in Arthrobacter sp. (strain FB24).